The primary structure comprises 119 residues: RNA guanine-N7 methyltransferase activating subunit (119 aa).

Positions 1–55 are interaction with RNMT; it reads MSDTSEEIPNFEEMFASRFTKDDKEYQEYLKRPPESPPIVEEWNSRAGGNQRNRG. Residues 30–119 are disordered; that stretch reads LKRPPESPPI…HNQRPPYGYY (90 aa). S36 carries the post-translational modification Phosphoserine. The RNMT-activating domain signature appears at 36–42; sequence SPPIVEE. Residues 47 to 61 show a composition bias toward polar residues; it reads AGGNQRNRGNWLQDN. Residues 56–119 are RNA-binding; sequence NWLQDNRQFR…HNQRPPYGYY (64 aa). The span at 62–73 shows a compositional bias: basic and acidic residues; it reads RQFRGRDNRRGW. R85 is subject to Omega-N-methylarginine. S86 carries the post-translational modification Phosphoserine. Residues 89 to 112 show a composition bias toward low complexity; it reads NNNYPQQRPEPYYQQQYTQYGHNQ.

The protein belongs to the RAM family. Interacts with RNMT; this interaction enhances mRNA binding and cap methyltransferase activity.

Its subcellular location is the nucleus. Regulatory subunit of the mRNA-capping methyltransferase RNMT:RAMAC complex that methylates the N7 position of the added guanosine to the 5'-cap structure of mRNAs. Promotes the recruitment of the methyl donor, S-adenosyl-L-methionine, to RNMT. Regulates RNMT expression by a post-transcriptional stabilizing mechanism. Binds RNA. The polypeptide is RNA guanine-N7 methyltransferase activating subunit (Ramac) (Mus musculus (Mouse)).